Here is a 367-residue protein sequence, read N- to C-terminus: Phospho-N-acetylmuramoyl-pentapeptide-transferase (367 aa).

The next 10 helical transmembrane spans lie at 34–54, 78–98, 101–121, 135–155, 175–195, 206–226, 246–266, 270–290, 295–315, and 344–364; these read GAVV…IDHL, TPTM…VLWA, LNPY…VGFY, FGSK…CYAL, TVLH…VGAG, GLAI…AYLA, LAVL…FNAP, IFMG…IAVA, IVLA…IVQV, and QIVI…LSTL.

Belongs to the glycosyltransferase 4 family. MraY subfamily. Mg(2+) is required as a cofactor.

Its subcellular location is the cell inner membrane. It catalyses the reaction UDP-N-acetyl-alpha-D-muramoyl-L-alanyl-gamma-D-glutamyl-meso-2,6-diaminopimeloyl-D-alanyl-D-alanine + di-trans,octa-cis-undecaprenyl phosphate = di-trans,octa-cis-undecaprenyl diphospho-N-acetyl-alpha-D-muramoyl-L-alanyl-D-glutamyl-meso-2,6-diaminopimeloyl-D-alanyl-D-alanine + UMP. Its pathway is cell wall biogenesis; peptidoglycan biosynthesis. In terms of biological role, catalyzes the initial step of the lipid cycle reactions in the biosynthesis of the cell wall peptidoglycan: transfers peptidoglycan precursor phospho-MurNAc-pentapeptide from UDP-MurNAc-pentapeptide onto the lipid carrier undecaprenyl phosphate, yielding undecaprenyl-pyrophosphoryl-MurNAc-pentapeptide, known as lipid I. The polypeptide is Phospho-N-acetylmuramoyl-pentapeptide-transferase (Bradyrhizobium diazoefficiens (strain JCM 10833 / BCRC 13528 / IAM 13628 / NBRC 14792 / USDA 110)).